The chain runs to 200 residues: MRLSGNGLRCVRGGREVFSGLDVAAESGHAVAITGPNGAGKTSLLRLLAGLLAIADGSISLEGGDPELTLPEQAHYLGHRDALKPALTVSENLSFWRDFLGGGKSGESDALAAVGLDHVAHLPAAYLSAGQRRRLSIARLLAVKRPVWLLDEPTSALDVTGQAAFAAIMTGHLAGGGIILAATHTPLGIAARELRIGGAA.

Positions 1-200 constitute an ABC transporter domain; the sequence is MRLSGNGLRC…ARELRIGGAA (200 aa). 35–42 is an ATP binding site; sequence GPNGAGKT.

It belongs to the ABC transporter superfamily. CcmA exporter (TC 3.A.1.107) family. As to quaternary structure, the complex is composed of two ATP-binding proteins (CcmA) and two transmembrane proteins (CcmB).

The protein localises to the cell inner membrane. The enzyme catalyses heme b(in) + ATP + H2O = heme b(out) + ADP + phosphate + H(+). Its function is as follows. Part of the ABC transporter complex CcmAB involved in the biogenesis of c-type cytochromes; once thought to export heme, this seems not to be the case, but its exact role is uncertain. Responsible for energy coupling to the transport system. The chain is Cytochrome c biogenesis ATP-binding export protein CcmA from Nitrobacter winogradskyi (strain ATCC 25391 / DSM 10237 / CIP 104748 / NCIMB 11846 / Nb-255).